The primary structure comprises 119 residues: UPF0102 protein PM0647 (119 aa).

It belongs to the UPF0102 family.

The sequence is that of UPF0102 protein PM0647 from Pasteurella multocida (strain Pm70).